The chain runs to 111 residues: Holo-[acyl-carrier-protein] synthase (111 aa).

Residues Asp8 and Glu57 each coordinate Mg(2+).

Belongs to the P-Pant transferase superfamily. AcpS family. Requires Mg(2+) as cofactor.

The protein localises to the cytoplasm. It catalyses the reaction apo-[ACP] + CoA = holo-[ACP] + adenosine 3',5'-bisphosphate + H(+). Functionally, transfers the 4'-phosphopantetheine moiety from coenzyme A to a Ser of acyl-carrier-protein. This is Holo-[acyl-carrier-protein] synthase from Mycoplasmoides gallisepticum (strain R(low / passage 15 / clone 2)) (Mycoplasma gallisepticum).